Here is a 145-residue protein sequence, read N- to C-terminus: D-aminoacyl-tRNA deacylase (145 aa).

Residues 137-138 (GP) carry the Gly-cisPro motif, important for rejection of L-amino acids motif.

The protein belongs to the DTD family. Homodimer.

Its subcellular location is the cytoplasm. The catalysed reaction is glycyl-tRNA(Ala) + H2O = tRNA(Ala) + glycine + H(+). The enzyme catalyses a D-aminoacyl-tRNA + H2O = a tRNA + a D-alpha-amino acid + H(+). An aminoacyl-tRNA editing enzyme that deacylates mischarged D-aminoacyl-tRNAs. Also deacylates mischarged glycyl-tRNA(Ala), protecting cells against glycine mischarging by AlaRS. Acts via tRNA-based rather than protein-based catalysis; rejects L-amino acids rather than detecting D-amino acids in the active site. By recycling D-aminoacyl-tRNA to D-amino acids and free tRNA molecules, this enzyme counteracts the toxicity associated with the formation of D-aminoacyl-tRNA entities in vivo and helps enforce protein L-homochirality. In Teredinibacter turnerae (strain ATCC 39867 / T7901), this protein is D-aminoacyl-tRNA deacylase.